Here is a 541-residue protein sequence, read N- to C-terminus: Glucose-6-phosphate isomerase (541 aa).

The Proton donor role is filled by E346. Catalysis depends on residues H377 and K506.

Belongs to the GPI family.

The protein localises to the cytoplasm. The enzyme catalyses alpha-D-glucose 6-phosphate = beta-D-fructose 6-phosphate. It functions in the pathway carbohydrate biosynthesis; gluconeogenesis. Its pathway is carbohydrate degradation; glycolysis; D-glyceraldehyde 3-phosphate and glycerone phosphate from D-glucose: step 2/4. In terms of biological role, catalyzes the reversible isomerization of glucose-6-phosphate to fructose-6-phosphate. The polypeptide is Glucose-6-phosphate isomerase (Rhizobium meliloti (strain 1021) (Ensifer meliloti)).